The chain runs to 259 residues: MLMVISPAKTLDYETPPVTQRFTQPQYLDHSQELIQQLRQLTPLQISELMKLSDKLAGLNAARYASWHPDFTPQNAKQALLAFKGDVYTGLDAESFSEDDFAFAQEHLRMLSGLYGVLRPLDLMQPYRLEMGTRLANARGKDLYAFWGERISQWLNEALAAQGDDVLLNLASNEYFGAVKRKALQARIIDTEFKDLKNGQYKIISFYAKKARGMMARYVVRERLRDPAGLKDFNAHGYYFSAEQSGPEQLVFLRDAPQD.

It belongs to the UPF0246 family.

This Pseudomonas paraeruginosa (strain DSM 24068 / PA7) (Pseudomonas aeruginosa (strain PA7)) protein is UPF0246 protein PSPA7_1607.